A 160-amino-acid polypeptide reads, in one-letter code: Allophycocyanin alpha chain (160 aa).

At Asn70 the chain carries N4-methylasparagine. (2R,3E)-phycocyanobilin is bound at residue Cys80.

The protein belongs to the phycobiliprotein family. Component of the phycobilisome. Heterodimer of an alpha and a beta chain. Post-translationally, contains one covalently linked phycocyanobilin chromophore.

It is found in the cellular thylakoid membrane. Functionally, light-harvesting photosynthetic bile pigment-protein from the phycobiliprotein complex. Allophycocyanin has a maximum absorption at approximately 650 nanometers. This chain is Allophycocyanin alpha chain (apcA), found in Mastigocladus laminosus (Fischerella sp.).